A 435-amino-acid chain; its full sequence is Zinc finger and BTB domain-containing protein 25 (435 aa).

In terms of domain architecture, BTB spans 1–107; that stretch reads MDTASHSLVL…GIRFLHADYL (107 aa). Glycyl lysine isopeptide (Lys-Gly) (interchain with G-Cter in SUMO2) cross-links involve residues K142, K148, K198, and K204. Residues 238–260 form a C2H2-type 1 zinc finger; sequence HLCHYCGERFDSRSNLRQHLHTH. Glycyl lysine isopeptide (Lys-Gly) (interchain with G-Cter in SUMO2) cross-links involve residues K303 and K330. The C2H2-type 2 zinc-finger motif lies at 349–371; the sequence is MSCTICGHKFPRKSQLLEHMYTH. Residue K405 forms a Glycyl lysine isopeptide (Lys-Gly) (interchain with G-Cter in SUMO2) linkage.

Expressed mainly in hematopoietic cells and testis.

The protein localises to the nucleus. Its function is as follows. May be involved in transcriptional regulation. The protein is Zinc finger and BTB domain-containing protein 25 (ZBTB25) of Homo sapiens (Human).